The sequence spans 188 residues: MSQDLNSGRIVVLAGPSAVGKSTVVRRLRTDVPDLFFSVSMTTRDPRPGEVDGEDYIYVTREQFEQNIAADKMLEWAEIHGGLQLSGTPREPIEKALAESRPVLVEVDLEGARNVKKMLPQVQTVFLAPPSWEELVDRLTGRGTETQDVIERRLQTAKVEMASQSEFDHVVVNDDVDKAVAAISEILR.

One can recognise a Guanylate kinase-like domain in the interval 8–188; sequence GRIVVLAGPS…AVAAISEILR (181 aa). 15–22 serves as a coordination point for ATP; it reads GPSAVGKS.

Belongs to the guanylate kinase family.

The protein resides in the cytoplasm. It carries out the reaction GMP + ATP = GDP + ADP. Functionally, essential for recycling GMP and indirectly, cGMP. The polypeptide is Guanylate kinase (Corynebacterium jeikeium (strain K411)).